Reading from the N-terminus, the 387-residue chain is Formate-dependent phosphoribosylglycinamide formyltransferase (387 aa).

Residues 15 to 16 (EL) and Glu75 contribute to the N(1)-(5-phospho-beta-D-ribosyl)glycinamide site. Residues Arg106, Lys147, 152-157 (SSGKGQ), 187-190 (EEFI), and Glu195 each bind ATP. Residues 111 to 301 (DLASNELNIR…EFELHLRAVL (191 aa)) enclose the ATP-grasp domain. Residues Glu260 and Glu272 each contribute to the Mg(2+) site. N(1)-(5-phospho-beta-D-ribosyl)glycinamide contacts are provided by residues Asp279, Lys349, and 356–357 (RR).

The protein belongs to the PurK/PurT family. As to quaternary structure, homodimer.

The catalysed reaction is N(1)-(5-phospho-beta-D-ribosyl)glycinamide + formate + ATP = N(2)-formyl-N(1)-(5-phospho-beta-D-ribosyl)glycinamide + ADP + phosphate + H(+). Its pathway is purine metabolism; IMP biosynthesis via de novo pathway; N(2)-formyl-N(1)-(5-phospho-D-ribosyl)glycinamide from N(1)-(5-phospho-D-ribosyl)glycinamide (formate route): step 1/1. Functionally, involved in the de novo purine biosynthesis. Catalyzes the transfer of formate to 5-phospho-ribosyl-glycinamide (GAR), producing 5-phospho-ribosyl-N-formylglycinamide (FGAR). Formate is provided by PurU via hydrolysis of 10-formyl-tetrahydrofolate. The chain is Formate-dependent phosphoribosylglycinamide formyltransferase from Prochlorococcus marinus (strain NATL1A).